A 150-amino-acid polypeptide reads, in one-letter code: UPF0756 membrane protein ECA1265 (150 aa).

4 consecutive transmembrane segments (helical) span residues 1–21, 51–71, 82–102, and 127–147; these read MAYI…GIIS, YGLS…IASG, FLHW…WLGG, and ALFR…SLLI.

It belongs to the UPF0756 family.

Its subcellular location is the cell membrane. This Pectobacterium atrosepticum (strain SCRI 1043 / ATCC BAA-672) (Erwinia carotovora subsp. atroseptica) protein is UPF0756 membrane protein ECA1265.